The sequence spans 695 residues: RING finger protein 145 (695 aa).

Transmembrane regions (helical) follow at residues 53–73 (YLALNMHYVGYILSVVLLTLP), 77–97 (LAKLYLYFVAALLLYAGHQIS), 123–143 (FITALVGQLVVCTLCSCVMKT), 146–166 (IWLFSAHMLPLLARLCLVPIE), 168–188 (IVVINKFAMIFTGLEVLYFLA), 225–245 (LVVPVLFMVFWLVLFALQIYT), 275–295 (YSLLGLVFTVSFVALGVLTLC), 316–336 (TEGVTLLILAVQTGLIELQVV), 340–360 (FLLSIILFIVVASILQSMLEI), 384–404 (SLCLFLLVFPSYMAYMICQFF), 410–430 (LLIIISSSILTSLQVLGTLFI), 460–480 (LLEFLVALCVVAYGVSETVFG), and 482–502 (WTVMGSMIIFIHSYYNVWLRA). Residues 537 to 575 (CSICYQDMNSAVITPCSHFFHPGCLKKWLYVQETCPLCH) form an RING-type; atypical zinc finger. The segment covering 585–603 (ATGESGSSTNPVSEQSATN) has biased composition (polar residues). Residues 585–610 (ATGESGSSTNPVSEQSATNPPLGPVS) are disordered.

It is found in the membrane. This Xenopus tropicalis (Western clawed frog) protein is RING finger protein 145 (rnf145).